Here is a 559-residue protein sequence, read N- to C-terminus: Protein QNR-71 (559 aa).

The N-terminal stretch at 1–22 (MSQAHRHLALLLPAEAVLCAAA) is a signal peptide. Over 23 to 487 (MRFQDVLSNG…NGGSSSGTTK (465 aa)) the chain is Extracellular. Asparagine 92, asparagine 133, asparagine 145, asparagine 149, asparagine 192, asparagine 199, asparagine 248, asparagine 274, asparagine 307, and asparagine 311 each carry an N-linked (GlcNAc...) asparagine glycan. Residues 239–326 (VSMSQKHDRN…IIPVPCKPVT (88 aa)) form the PKD domain. The interval 329 to 356 (PSLPTPAVTTDASSNSDPSAPNEMAEDN) is disordered. Residues 335 to 347 (AVTTDASSNSDPS) are compositionally biased toward polar residues. The N-linked (GlcNAc...) asparagine glycan is linked to asparagine 459. The helical transmembrane segment at 488 to 508 (GVFIFLGLLAVFGAIGAFVLY) threads the bilayer. Residues 509-559 (KRYKQYKPIERSAGQAENQEGLSAYVSNFKAFFFPKSTERNPLLKSKPGIV) are Cytoplasmic-facing.

The protein belongs to the PMEL/NMB family. In terms of tissue distribution, melanocyte-specific, restricted to the pigmented layer of the retina and the epidermis.

It localises to the membrane. Its function is as follows. Could be involved in melanogenesis. The polypeptide is Protein QNR-71 (QNR-71) (Coturnix japonica (Japanese quail)).